The chain runs to 227 residues: Octanoyltransferase (227 aa).

Residues 35–222 (EAYENRIIMC…ELGRLLNEKK (188 aa)) form the BPL/LPL catalytic domain. Substrate-binding positions include 80 to 87 (RGGDITYH), 152 to 154 (AIG), and 165 to 167 (GLA). Catalysis depends on Cys183, which acts as the Acyl-thioester intermediate.

The protein belongs to the LipB family.

Its subcellular location is the cytoplasm. It carries out the reaction octanoyl-[ACP] + L-lysyl-[protein] = N(6)-octanoyl-L-lysyl-[protein] + holo-[ACP] + H(+). The protein operates within protein modification; protein lipoylation via endogenous pathway; protein N(6)-(lipoyl)lysine from octanoyl-[acyl-carrier-protein]: step 1/2. In terms of biological role, catalyzes the transfer of endogenously produced octanoic acid from octanoyl-acyl-carrier-protein onto the lipoyl domains of lipoate-dependent enzymes. Lipoyl-ACP can also act as a substrate although octanoyl-ACP is likely to be the physiological substrate. This is Octanoyltransferase from Bacteroides thetaiotaomicron (strain ATCC 29148 / DSM 2079 / JCM 5827 / CCUG 10774 / NCTC 10582 / VPI-5482 / E50).